The following is a 1630-amino-acid chain: Probable phosphoinositide phosphatase SAC9 (1630 aa).

In terms of domain architecture, SAC spans 147–527; that stretch reads LTELDIDGKH…ADAVTGKSYY (381 aa). Residues 456-467 carry the Phosphatase catalytic core; degenerate motif; the sequence is RFNCADSLDRTN. Residues 508-542 enclose the WW domain; that stretch reads APLPPGWEKRADAVTGKSYYIDHNTKTTTWSHPCP.

Ubiquitous. Most abundant in the roots with lower expression levels throughout the leaves and shoot.

Probable phosphoinositide phosphatase that could be involved in stress signaling. The polypeptide is Probable phosphoinositide phosphatase SAC9 (SAC9) (Arabidopsis thaliana (Mouse-ear cress)).